Consider the following 317-residue polypeptide: Melanocyte-stimulating hormone receptor (317 aa).

The Extracellular segment spans residues 1-37 (MPVQGSQRRLLGSLNSTPTATPHLGLAANQTGARCLE). N-linked (GlcNAc...) asparagine glycosylation occurs at Asn29. Residues 38 to 63 (VSVPDGLFLSLGLVSLVENVLVVTAI) traverse the membrane as a helical segment. Residues 64-72 (AKNRNLHSP) are Cytoplasmic-facing. A helical transmembrane segment spans residues 73 to 93 (MYCFICCLALSDLLVSGSNML). Over 94–118 (ETAVTLLLEAGALAARAAVVQQLDN) the chain is Extracellular. Residues 119-140 (VIDVITCSSMLSSLCFLGAIAV) traverse the membrane as a helical segment. The Cytoplasmic portion of the chain corresponds to 141 to 163 (DRYISIFYALRYHSIVTLPRARR). The chain crosses the membrane as a helical span at residues 164–183 (AVAAIWVASVLFSTLFIAYY). Residues 184–191 (DHAAVLLC) are Extracellular-facing. The chain crosses the membrane as a helical span at residues 192–211 (LVIFFLAMLVLMAVLYVHML). Residues 212–240 (ARACQHAQGIARLHKRQRLAHQGFGLKGA) lie on the Cytoplasmic side of the membrane. The helical transmembrane segment at 241–266 (ATLTILLGIFFLCWGPFFLHLTLIVL) threads the bilayer. Topologically, residues 267 to 279 (CPQHPTCSCIFKN) are extracellular. The helical transmembrane segment at 280–300 (FNLFLALIICNAIIDPLIYAF) threads the bilayer. The Cytoplasmic segment spans residues 301 to 317 (RSQELRRTLKEVLLCSW). Cys315 is lipidated: S-palmitoyl cysteine.

This sequence belongs to the G-protein coupled receptor 1 family. As to quaternary structure, interacts with MGRN1, but does not undergo MGRN1-mediated ubiquitination; this interaction competes with GNAS-binding and thus inhibits agonist-induced cAMP production. Interacts with OPN3; the interaction results in a decrease in MC1R-mediated cAMP signaling and ultimately a decrease in melanin production in melanocytes.

The protein resides in the cell membrane. In terms of biological role, receptor for MSH (alpha, beta and gamma) and ACTH. The activity of this receptor is mediated by G proteins which activate adenylate cyclase. Mediates melanogenesis, the production of eumelanin (black/brown) and phaeomelanin (red/yellow), via regulation of cAMP signaling in melanocytes. In Papio hamadryas (Hamadryas baboon), this protein is Melanocyte-stimulating hormone receptor (MC1R).